A 368-amino-acid polypeptide reads, in one-letter code: UDP-galactose/UDP-N-acetylglucosamine transporter srf-3 (368 aa).

8 helical membrane passes run 72 to 92 (FVST…CLFL), 118 to 138 (LKVC…YVAA), 145 to 165 (TFMI…VIIL), 174 to 194 (WFAL…GTKA), 203 to 223 (FVGF…GIYF), 235 to 254 (LWMR…FSAI), 273 to 293 (SIVW…AVCI), and 317 to 337 (IFLF…LVIF).

It belongs to the nucleotide-sugar transporter family. SLC35A subfamily. Expressed exclusively in pharyngeal cells g1 and g2, lateral seam cells, spermatheca and vas deferens.

The protein localises to the golgi apparatus membrane. Its function is as follows. Acts as a transporter of both UDP-galactose and UDP-N-acetylglucosamine into the Golgi lumen. Apparently transports UDP-galactose and UDP-N-acetylglucosamine simultaneously, and independently, by an unknown mechanism. Functions redundantly with nucleotide sugar transporter nstp-4. May be involved in gonadal development. This Caenorhabditis elegans protein is UDP-galactose/UDP-N-acetylglucosamine transporter srf-3 (srf-3).